The following is a 475-amino-acid chain: Aspartyl/glutamyl-tRNA(Asn/Gln) amidotransferase subunit B (475 aa).

It belongs to the GatB/GatE family. GatB subfamily. As to quaternary structure, heterotrimer of A, B and C subunits.

It catalyses the reaction L-glutamyl-tRNA(Gln) + L-glutamine + ATP + H2O = L-glutaminyl-tRNA(Gln) + L-glutamate + ADP + phosphate + H(+). The catalysed reaction is L-aspartyl-tRNA(Asn) + L-glutamine + ATP + H2O = L-asparaginyl-tRNA(Asn) + L-glutamate + ADP + phosphate + 2 H(+). Allows the formation of correctly charged Asn-tRNA(Asn) or Gln-tRNA(Gln) through the transamidation of misacylated Asp-tRNA(Asn) or Glu-tRNA(Gln) in organisms which lack either or both of asparaginyl-tRNA or glutaminyl-tRNA synthetases. The reaction takes place in the presence of glutamine and ATP through an activated phospho-Asp-tRNA(Asn) or phospho-Glu-tRNA(Gln). The polypeptide is Aspartyl/glutamyl-tRNA(Asn/Gln) amidotransferase subunit B (Chlorobium phaeobacteroides (strain BS1)).